The sequence spans 330 residues: SUMO-activating enzyme subunit 1 (330 aa).

It belongs to the ubiquitin-activating E1 family. In terms of assembly, heterodimer of sae1 and sae2. The complex binds sumo via sae2.

The protein localises to the nucleus. The protein operates within protein modification; protein sumoylation. Its function is as follows. The dimeric enzyme acts as an E1 ligase for sumo. It mediates ATP-dependent activation of sumo and formation of a thioester with a conserved cysteine residue on sae2. This is SUMO-activating enzyme subunit 1 (sae1) from Dictyostelium discoideum (Social amoeba).